We begin with the raw amino-acid sequence, 188 residues long: dCTP deaminase (188 aa).

109–114 serves as a coordination point for dCTP; that stretch reads KSTYAR. Glu135 serves as the catalytic Proton donor/acceptor. DCTP is bound by residues Gln154, Tyr168, and Gln178.

The protein belongs to the dCTP deaminase family. Homotrimer.

It catalyses the reaction dCTP + H2O + H(+) = dUTP + NH4(+). It functions in the pathway pyrimidine metabolism; dUMP biosynthesis; dUMP from dCTP (dUTP route): step 1/2. Catalyzes the deamination of dCTP to dUTP. The protein is dCTP deaminase of Helicobacter pylori (strain P12).